A 379-amino-acid polypeptide reads, in one-letter code: MKILRKNHPLLKIINHSFIDLPTPSNISSWWNFGSLLGMCLMIQILTGLFLAMHYTSDTTTAFSSVAHICRDVNYGWLIRYLHANGASMFFICLFIHVGRGIYYGSYVLSETWNIGIILFLTTMATAFVGYVLPWGQMSFWGATVITNLLSAIPYIGSTLVEWIWGGFSVDKATLTRFFAFHFILPFIITAFVLVHLLFLHETGSNNPSGLNSNSDKIPFHPYYTIKDLLGILFLLTALMILALFFPDILGDPDNYTPANPLNTPAHIKPEWYFLFAYAILRSIPNKLGGVLALLLSILILMAFPLLNTSKQHGLIFRPITQTIYWILIANLLVLTWIGGQPVEYPFTMIGQIASITYFAIILILXPVSNTIENNIIKL.

The next 4 helical transmembrane spans lie at 33–53 (FGSLLGMCLMIQILTGLFLAM), 77–98 (WLIRYLHANGASMFFICLFIHV), 113–133 (WNIGIILFLTTMATAFVGYVL), and 178–198 (FFAFHFILPFIITAFVLVHLL). Heme b contacts are provided by His83 and His97. Residues His182 and His196 each coordinate heme b. A ubiquinone is bound at residue His201. Transmembrane regions (helical) follow at residues 226 to 246 (IKDLLGILFLLTALMILALFF), 288 to 308 (LGGVLALLLSILILMAFPLLN), 320 to 340 (ITQTIYWILIANLLVLTWIGG), and 347 to 367 (FTMIGQIASITYFAIILILXP).

The protein belongs to the cytochrome b family. The cytochrome bc1 complex contains 11 subunits: 3 respiratory subunits (MT-CYB, CYC1 and UQCRFS1), 2 core proteins (UQCRC1 and UQCRC2) and 6 low-molecular weight proteins (UQCRH/QCR6, UQCRB/QCR7, UQCRQ/QCR8, UQCR10/QCR9, UQCR11/QCR10 and a cleavage product of UQCRFS1). This cytochrome bc1 complex then forms a dimer. Requires heme b as cofactor.

It localises to the mitochondrion inner membrane. Functionally, component of the ubiquinol-cytochrome c reductase complex (complex III or cytochrome b-c1 complex) that is part of the mitochondrial respiratory chain. The b-c1 complex mediates electron transfer from ubiquinol to cytochrome c. Contributes to the generation of a proton gradient across the mitochondrial membrane that is then used for ATP synthesis. This is Cytochrome b (MT-CYB) from Akodon toba (Chaco grass mouse).